Consider the following 456-residue polypeptide: Bifunctional protein GlmU (456 aa).

Residues Met-1–Arg-229 are pyrophosphorylase. Residues Leu-11–Gly-14, Lys-25, Gln-76, Gly-81–Thr-82, Tyr-103–Asp-105, Gly-140, Glu-154, Asn-169, and Asn-227 contribute to the UDP-N-acetyl-alpha-D-glucosamine site. Asp-105 contributes to the Mg(2+) binding site. Asn-227 is a binding site for Mg(2+). The tract at residues Leu-230 to Ala-250 is linker. The segment at Gly-251 to Lys-456 is N-acetyltransferase. Arg-333 and Lys-351 together coordinate UDP-N-acetyl-alpha-D-glucosamine. His-363 functions as the Proton acceptor in the catalytic mechanism. Residues Tyr-366 and Asn-377 each contribute to the UDP-N-acetyl-alpha-D-glucosamine site. Acetyl-CoA-binding positions include Ala-380, Asn-386 to Tyr-387, Ser-405, Ala-423, and Arg-440.

The protein in the N-terminal section; belongs to the N-acetylglucosamine-1-phosphate uridyltransferase family. It in the C-terminal section; belongs to the transferase hexapeptide repeat family. In terms of assembly, homotrimer. Mg(2+) is required as a cofactor.

Its subcellular location is the cytoplasm. The enzyme catalyses alpha-D-glucosamine 1-phosphate + acetyl-CoA = N-acetyl-alpha-D-glucosamine 1-phosphate + CoA + H(+). The catalysed reaction is N-acetyl-alpha-D-glucosamine 1-phosphate + UTP + H(+) = UDP-N-acetyl-alpha-D-glucosamine + diphosphate. The protein operates within nucleotide-sugar biosynthesis; UDP-N-acetyl-alpha-D-glucosamine biosynthesis; N-acetyl-alpha-D-glucosamine 1-phosphate from alpha-D-glucosamine 6-phosphate (route II): step 2/2. It functions in the pathway nucleotide-sugar biosynthesis; UDP-N-acetyl-alpha-D-glucosamine biosynthesis; UDP-N-acetyl-alpha-D-glucosamine from N-acetyl-alpha-D-glucosamine 1-phosphate: step 1/1. It participates in bacterial outer membrane biogenesis; LPS lipid A biosynthesis. Its function is as follows. Catalyzes the last two sequential reactions in the de novo biosynthetic pathway for UDP-N-acetylglucosamine (UDP-GlcNAc). The C-terminal domain catalyzes the transfer of acetyl group from acetyl coenzyme A to glucosamine-1-phosphate (GlcN-1-P) to produce N-acetylglucosamine-1-phosphate (GlcNAc-1-P), which is converted into UDP-GlcNAc by the transfer of uridine 5-monophosphate (from uridine 5-triphosphate), a reaction catalyzed by the N-terminal domain. This chain is Bifunctional protein GlmU, found in Yersinia enterocolitica serotype O:8 / biotype 1B (strain NCTC 13174 / 8081).